Consider the following 691-residue polypeptide: Calcium-binding and coiled-coil domain-containing protein 1 (691 aa).

The tract at residues 1–30 (MEESPLSRAPSRGGVNFLNVARTYIPNTKV) is p300 KIX-binding. The tract at residues 1 to 190 (MEESPLSRAP…VQELERALAT (190 aa)) is N-terminal AD (CTNNB1 binding site). Ser-4 carries the phosphoserine modification. The interaction with GATA1 stretch occupies residues 45–125 (SDWIGIFKVE…FQFREPRPMD (81 aa)). Coiled-coil stretches lie at residues 145-205 (KATV…YKGI), 232-339 (ELED…AELE), and 417-514 (QSVE…ADEK). The segment at 501–691 (RKLEARLEKV…FSTQDPFTFE (191 aa)) is C-terminal AD (CTNNB1 binding site); interaction with CCAR1. Positions 513–604 (EKWNEDATTE…SDSEAEDEKS (92 aa)) are disordered. Residues 653 to 679 (WKECPICKERFPAESDKDALEDHMDGH) form a UBZ1-type zinc finger. Zn(2+) is bound by residues Cys-656, Cys-659, His-675, and His-679.

The protein belongs to the CALCOCO family. As to quaternary structure, part of a calphoglin complex consisting of CALCOCO1, PPA1 and PGM. Interacts with the bHLH-PAS domains of GRIP1, AHR and ARNT. Interacts with CTNNB1 via both its N- and C-terminal regions. Interacts with EP300. Interacts with CCAR1 (via N-terminus) and GATA1.

It is found in the cytoplasm. The protein resides in the nucleus. Functions as a coactivator for aryl hydrocarbon and nuclear receptors (NR). Recruited to promoters through its contact with the N-terminal basic helix-loop-helix-Per-Arnt-Sim (PAS) domain of transcription factors or coactivators, such as NCOA2. During ER-activation acts synergistically in combination with other NCOA2-binding proteins, such as EP300, CREBBP and CARM1. Involved in the transcriptional activation of target genes in the Wnt/CTNNB1 pathway. Functions as a secondary coactivator in LEF1-mediated transcriptional activation via its interaction with CTNNB1. Coactivator function for nuclear receptors and LEF1/CTNNB1 involves differential utilization of two different activation regions. In association with CCAR1 enhances GATA1- and MED1-mediated transcriptional activation from the gamma-globin promoter during erythroid differentiation of K562 erythroleukemia cells. In terms of biological role, seems to enhance inorganic pyrophosphatase thus activating phosphogluomutase (PMG). Probably functions as a component of the calphoglin complex, which is involved in linking cellular metabolism (phosphate and glucose metabolism) with other core functions including protein synthesis and degradation, calcium signaling and cell growth. This chain is Calcium-binding and coiled-coil domain-containing protein 1 (CALCOCO1), found in Pongo abelii (Sumatran orangutan).